The following is a 354-amino-acid chain: Ornithine carbamoyltransferase, catabolic (354 aa).

Residues 67-70 (STRT), Gln94, Arg118, and 145-148 (HPTQ) each bind carbamoyl phosphate. Residues Asn177, Asp241, and 245 to 246 (SM) contribute to the L-ornithine site. Carbamoyl phosphate is bound by residues 284–285 (CL) and Arg329.

Belongs to the aspartate/ornithine carbamoyltransferase superfamily. OTCase family.

Its subcellular location is the cytoplasm. It carries out the reaction carbamoyl phosphate + L-ornithine = L-citrulline + phosphate + H(+). It functions in the pathway amino-acid degradation; L-arginine degradation via ADI pathway; carbamoyl phosphate from L-arginine: step 2/2. Reversibly catalyzes the transfer of the carbamoyl group from carbamoyl phosphate (CP) to the N(epsilon) atom of ornithine (ORN) to produce L-citrulline. The polypeptide is Ornithine carbamoyltransferase, catabolic (arcB) (Lactococcus lactis subsp. lactis (strain IL1403) (Streptococcus lactis)).